Reading from the N-terminus, the 301-residue chain is Bifunctional dTDP-4-dehydrorhamnose 3,5-epimerase/dTDP-4-dehydrorhamnose reductase (301 aa).

Residues 23 to 24, 69 to 71, and Y111 each bind NADPH; these read WI and GVT.

The protein belongs to the dTDP-4-dehydrorhamnose reductase family. Expressed in roots, leaves, stems and flowers.

It catalyses the reaction dTDP-4-dehydro-6-deoxy-alpha-D-glucose = dTDP-4-dehydro-beta-L-rhamnose. It carries out the reaction dTDP-beta-L-rhamnose + NADP(+) = dTDP-4-dehydro-beta-L-rhamnose + NADPH + H(+). The protein operates within carbohydrate biosynthesis; dTDP-L-rhamnose biosynthesis. Functionally, bifunctional enzyme involved in dTDP-beta-L-rhamnose biosynthesis. Catalyzes the epimerization of the C3' and C5'positions of dTDP-6-deoxy-4-keto-alpha-D-glucose to form dTDP-4-keto-beta-L-rhamnose and its reduction to yield dTDP-beta-L-rhamnose. Can form UDP-beta-L-rhamnose from UDP-6-deoxy-4-keto-alpha-D-glucose, but cannot convert GDP-4-dehydro-6-deoxy-D-mannose to GDP-fucose. The polypeptide is Bifunctional dTDP-4-dehydrorhamnose 3,5-epimerase/dTDP-4-dehydrorhamnose reductase (Arabidopsis thaliana (Mouse-ear cress)).